The chain runs to 131 residues: Profilin (131 aa).

It belongs to the profilin family. Occurs in many kinds of cells as a complex with monomeric actin in a 1:1 ratio.

The protein localises to the cytoplasm. The protein resides in the cytoskeleton. Functionally, binds to actin and affects the structure of the cytoskeleton. At high concentrations, profilin prevents the polymerization of actin, whereas it enhances it at low concentrations. Has a high affinity for poly-proline. This chain is Profilin, found in Citrullus lanatus (Watermelon).